Reading from the N-terminus, the 54-residue chain is UPF0391 membrane protein BMEI0373 (54 aa).

2 consecutive transmembrane segments (helical) span residues 5 to 25 and 29 to 48; these read VLVF…GIAG and GIAQ…SLIA.

It belongs to the UPF0391 family.

It localises to the cell membrane. The polypeptide is UPF0391 membrane protein BMEI0373 (Brucella melitensis biotype 1 (strain ATCC 23456 / CCUG 17765 / NCTC 10094 / 16M)).